The chain runs to 280 residues: Protein synthesis inhibitor II (280 aa).

Position 1 is an N-acetylalanine (alanine 1). Glutamate 174 is an active-site residue.

Belongs to the ribosome-inactivating protein family. Type 1 RIP subfamily.

The protein resides in the cytoplasm. It carries out the reaction Endohydrolysis of the N-glycosidic bond at one specific adenosine on the 28S rRNA.. Its function is as follows. Inhibits the elongation phase of protein synthesis. It inactivates fungal ribosomes even more effectively than mammalian ribosomes and is thought to function as a constitutive antifungal agent in plants. This chain is Protein synthesis inhibitor II (RIP30A), found in Hordeum vulgare (Barley).